The sequence spans 678 residues: Glycine--tRNA ligase beta subunit (678 aa).

The protein belongs to the class-II aminoacyl-tRNA synthetase family. In terms of assembly, tetramer of two alpha and two beta subunits.

The protein localises to the cytoplasm. The catalysed reaction is tRNA(Gly) + glycine + ATP = glycyl-tRNA(Gly) + AMP + diphosphate. The chain is Glycine--tRNA ligase beta subunit from Streptococcus pneumoniae serotype 19F (strain G54).